The sequence spans 483 residues: uncharacterized protein (483 aa).

Residues 11 to 71 enclose the TRAM domain; it reads RYRKGDIIEL…SRYLEARAIE (61 aa). 4 residues coordinate [4Fe-4S] cluster: cysteine 84, cysteine 90, cysteine 93, and cysteine 187. Residues glutamine 312, tyrosine 341, glutamate 362, and aspartate 412 each contribute to the S-adenosyl-L-methionine site. Cysteine 439 acts as the Nucleophile in catalysis.

It belongs to the class I-like SAM-binding methyltransferase superfamily. RNA M5U methyltransferase family.

This is an uncharacterized protein from Chlorobaculum tepidum (strain ATCC 49652 / DSM 12025 / NBRC 103806 / TLS) (Chlorobium tepidum).